Consider the following 248-residue polypeptide: Acetylglutamate kinase (248 aa).

Substrate-binding positions include 36–37, Arg-58, and Asn-147; that span reads GG.

It belongs to the acetylglutamate kinase family. ArgB subfamily.

It localises to the cytoplasm. It catalyses the reaction N-acetyl-L-glutamate + ATP = N-acetyl-L-glutamyl 5-phosphate + ADP. The protein operates within amino-acid biosynthesis; L-arginine biosynthesis; N(2)-acetyl-L-ornithine from L-glutamate: step 2/4. Its function is as follows. Catalyzes the ATP-dependent phosphorylation of N-acetyl-L-glutamate. This Thermus thermophilus (strain ATCC BAA-163 / DSM 7039 / HB27) protein is Acetylglutamate kinase.